We begin with the raw amino-acid sequence, 469 residues long: Glutamate--tRNA ligase 2 (469 aa).

The 'HIGH' region motif lies at proline 10–glycine 20. Residues cysteine 99, cysteine 101, cysteine 126, and aspartate 128 each coordinate Zn(2+). The short motif at arginine 237–arginine 241 is the 'KMSKS' region element. Residue lysine 240 coordinates ATP.

It belongs to the class-I aminoacyl-tRNA synthetase family. Glutamate--tRNA ligase type 1 subfamily. Monomer. Zn(2+) serves as cofactor.

Its subcellular location is the cytoplasm. The catalysed reaction is tRNA(Glu) + L-glutamate + ATP = L-glutamyl-tRNA(Glu) + AMP + diphosphate. Its function is as follows. Catalyzes the attachment of glutamate to tRNA(Glu) in a two-step reaction: glutamate is first activated by ATP to form Glu-AMP and then transferred to the acceptor end of tRNA(Glu). The protein is Glutamate--tRNA ligase 2 of Coxiella burnetii (strain CbuG_Q212) (Coxiella burnetii (strain Q212)).